Reading from the N-terminus, the 805-residue chain is Sucrose synthase (805 aa).

Positions 275-752 (MVFNVVILSP…GLKRIQEKYT (478 aa)) are GT-B glycosyltransferase.

This sequence belongs to the glycosyltransferase 1 family. Plant sucrose synthase subfamily.

It catalyses the reaction an NDP-alpha-D-glucose + D-fructose = a ribonucleoside 5'-diphosphate + sucrose + H(+). In terms of biological role, sucrose-cleaving enzyme that provides UDP-glucose and fructose for various metabolic pathways. The sequence is that of Sucrose synthase from Solanum tuberosum (Potato).